Reading from the N-terminus, the 702-residue chain is Ribosomal RNA large subunit methyltransferase K/L (702 aa).

Residues 43 to 154 (LVYQSLMWSR…KETASIALDL (112 aa)) enclose the THUMP domain.

It belongs to the methyltransferase superfamily. RlmKL family.

The protein localises to the cytoplasm. It catalyses the reaction guanosine(2445) in 23S rRNA + S-adenosyl-L-methionine = N(2)-methylguanosine(2445) in 23S rRNA + S-adenosyl-L-homocysteine + H(+). The enzyme catalyses guanosine(2069) in 23S rRNA + S-adenosyl-L-methionine = N(2)-methylguanosine(2069) in 23S rRNA + S-adenosyl-L-homocysteine + H(+). Specifically methylates the guanine in position 2445 (m2G2445) and the guanine in position 2069 (m7G2069) of 23S rRNA. In Escherichia coli O139:H28 (strain E24377A / ETEC), this protein is Ribosomal RNA large subunit methyltransferase K/L.